Reading from the N-terminus, the 454-residue chain is UPF0210 protein Mhun_2657 (454 aa).

This sequence belongs to the UPF0210 family.

The sequence is that of UPF0210 protein Mhun_2657 from Methanospirillum hungatei JF-1 (strain ATCC 27890 / DSM 864 / NBRC 100397 / JF-1).